Reading from the N-terminus, the 153-residue chain is Protein ripply2.2 (153 aa).

The WRPW motif; required for transcriptional repression and interaction with tle4 signature appears at 58–61 (WRPW). The tract at residues 93 to 128 (HPVRLFWPKSKLLDNTYQEAADLLRNFPVQATISLY) is ripply homology domain. The disordered stretch occupies residues 127–153 (LYNDSESDTDNEEDSSEEEQDSGFESE). A compositionally biased stretch (acidic residues) spans 131-153 (SESDTDNEEDSSEEEQDSGFESE).

The protein belongs to the ripply family. In terms of assembly, interacts with tle4 and tbx6, and mediates interaction between these proteins. Expressed in the presomitic mesoderm (PSM) in the anterior halves of somitomeres S-I, S-II and S-III.

The protein localises to the nucleus. Required during somitogenesis for the formation of somite boundaries. Represses the expression of genes involved in somite segmentation by acting with the corepressor tle4 to down-regulate the transcriptional activity of tbx6. May act by regulating the activity of tle4. Represses transcription of delta2, thy1 and ripply2.2/bowline itself. In Xenopus laevis (African clawed frog), this protein is Protein ripply2.2 (ripply2.2).